The chain runs to 430 residues: Adenylosuccinate synthetase (430 aa).

GTP contacts are provided by residues 13-19 (GDEGKGK) and 41-43 (GHT). Aspartate 14 serves as the catalytic Proton acceptor. Residues aspartate 14 and glycine 41 each contribute to the Mg(2+) site. Residues 14 to 17 (DEGK), 39 to 42 (NAGH), threonine 130, arginine 144, glutamine 225, threonine 240, and arginine 304 contribute to the IMP site. Histidine 42 acts as the Proton donor in catalysis. 300–306 (STTGRAR) serves as a coordination point for substrate. GTP contacts are provided by residues arginine 306, 332–334 (KLD), and 414–416 (STG).

The protein belongs to the adenylosuccinate synthetase family. In terms of assembly, homodimer. Mg(2+) serves as cofactor.

The protein resides in the cytoplasm. The enzyme catalyses IMP + L-aspartate + GTP = N(6)-(1,2-dicarboxyethyl)-AMP + GDP + phosphate + 2 H(+). It participates in purine metabolism; AMP biosynthesis via de novo pathway; AMP from IMP: step 1/2. Plays an important role in the de novo pathway of purine nucleotide biosynthesis. Catalyzes the first committed step in the biosynthesis of AMP from IMP. This chain is Adenylosuccinate synthetase, found in Pseudomonas putida (strain ATCC 700007 / DSM 6899 / JCM 31910 / BCRC 17059 / LMG 24140 / F1).